A 367-amino-acid chain; its full sequence is Flagellar P-ring protein (367 aa).

Residues 1–18 (MFRALITALFCFSGLALA) form the signal peptide.

This sequence belongs to the FlgI family. In terms of assembly, the basal body constitutes a major portion of the flagellar organelle and consists of four rings (L,P,S, and M) mounted on a central rod.

It is found in the periplasm. Its subcellular location is the bacterial flagellum basal body. Functionally, assembles around the rod to form the L-ring and probably protects the motor/basal body from shearing forces during rotation. The protein is Flagellar P-ring protein of Rhizorhabdus wittichii (strain DSM 6014 / CCUG 31198 / JCM 15750 / NBRC 105917 / EY 4224 / RW1) (Sphingomonas wittichii).